Consider the following 208-residue polypeptide: ATP-dependent Clp protease proteolytic subunit (208 aa).

S98 acts as the Nucleophile in catalysis. Residue H123 is part of the active site.

It belongs to the peptidase S14 family. As to quaternary structure, fourteen ClpP subunits assemble into 2 heptameric rings which stack back to back to give a disk-like structure with a central cavity, resembling the structure of eukaryotic proteasomes.

It localises to the cytoplasm. The enzyme catalyses Hydrolysis of proteins to small peptides in the presence of ATP and magnesium. alpha-casein is the usual test substrate. In the absence of ATP, only oligopeptides shorter than five residues are hydrolyzed (such as succinyl-Leu-Tyr-|-NHMec, and Leu-Tyr-Leu-|-Tyr-Trp, in which cleavage of the -Tyr-|-Leu- and -Tyr-|-Trp bonds also occurs).. Its function is as follows. Cleaves peptides in various proteins in a process that requires ATP hydrolysis. Has a chymotrypsin-like activity. Plays a major role in the degradation of misfolded proteins. The chain is ATP-dependent Clp protease proteolytic subunit from Wolbachia sp. subsp. Drosophila simulans (strain wRi).